A 672-amino-acid chain; its full sequence is UvrABC system protein B (672 aa).

Residues 26–183 form the Helicase ATP-binding domain; the sequence is EGLEDGLAHQ…RRLSELQYVR (158 aa). 39–46 is an ATP binding site; that stretch reads GVTGSGKT. Positions 92 to 115 match the Beta-hairpin motif; sequence YYDYYQPEAYVPSSDTFIEKDASV. Residues 431 to 597 enclose the Helicase C-terminal domain; that stretch reads QVDDLLSEIN…ALNKKVTDIL (167 aa). The segment at 601-623 is disordered; it reads DGPVRSRTKGARGQRAAEPHPDY. Residues 632-667 form the UVR domain; the sequence is EQQIQRLETQMYQHAQNLEFEQAAALRDEIHILREQ.

This sequence belongs to the UvrB family. In terms of assembly, forms a heterotetramer with UvrA during the search for lesions. Interacts with UvrC in an incision complex.

The protein resides in the cytoplasm. Its function is as follows. The UvrABC repair system catalyzes the recognition and processing of DNA lesions. A damage recognition complex composed of 2 UvrA and 2 UvrB subunits scans DNA for abnormalities. Upon binding of the UvrA(2)B(2) complex to a putative damaged site, the DNA wraps around one UvrB monomer. DNA wrap is dependent on ATP binding by UvrB and probably causes local melting of the DNA helix, facilitating insertion of UvrB beta-hairpin between the DNA strands. Then UvrB probes one DNA strand for the presence of a lesion. If a lesion is found the UvrA subunits dissociate and the UvrB-DNA preincision complex is formed. This complex is subsequently bound by UvrC and the second UvrB is released. If no lesion is found, the DNA wraps around the other UvrB subunit that will check the other stand for damage. This Edwardsiella ictaluri (strain 93-146) protein is UvrABC system protein B.